A 482-amino-acid polypeptide reads, in one-letter code: MVTTAERTNVGFITQVIGPVIDIEFPSGKMPAIYNALRIQGKNAAGLDVAVTCEVQQLLGDNRVRAVAMSSTDGLVRGMEAVDTGAPISVPVGTATLGRIFNVLGEPVDEKGEVNISETLPIHRPAPSFTELETKPSVFETGIKVIDLLTPYRRGGKIGLFGGAGVGKTVIMMELINNIATQHGGVSVFAGVGERTREGNDLYNEMIESGVIDKDDPSKSKIALVYGQMNEPPGARMRVGLSGLTMAEYFRDVNKQDVLLFVDNIFRFVQAGSEVSALLGRMPSAVGYQPTLGTDVGALQERITSTMEGSITSIQAVYVPADDLTDPAPATTFAHLDGTTVLSRGLAAKGIYPAVDPLGSTSNMLQPDIVGSEHYQTARAVQATLQRYKELQDIIAILGLDELSEEDRLTVARARKVERFLSQPFFVAEVFTGAPGKYVTLEETIKGFQMILSGELDDLPEQAFYMVGNIEEAKAKAEKLKA.

ATP is bound at residue 162–169; that stretch reads GGAGVGKT.

The protein belongs to the ATPase alpha/beta chains family. F-type ATPases have 2 components, CF(1) - the catalytic core - and CF(0) - the membrane proton channel. CF(1) has five subunits: alpha(3), beta(3), gamma(1), delta(1), epsilon(1). CF(0) has four main subunits: a(1), b(1), b'(1) and c(9-12).

It is found in the cellular thylakoid membrane. The catalysed reaction is ATP + H2O + 4 H(+)(in) = ADP + phosphate + 5 H(+)(out). In terms of biological role, produces ATP from ADP in the presence of a proton gradient across the membrane. The catalytic sites are hosted primarily by the beta subunits. The protein is ATP synthase subunit beta of Synechococcus sp. (strain PCC 6716).